Here is a 371-residue protein sequence, read N- to C-terminus: DNA-directed RNA polymerase subunit alpha (371 aa).

Residues 1-248 are alpha N-terminal domain (alpha-NTD); that stretch reads MSVKYGKFEM…KHFEVFNQFN (248 aa). Positions 264-371 are alpha C-terminal domain (alpha-CTD); the sequence is DQDELMDKLS…KELVKHEDAK (108 aa).

It belongs to the RNA polymerase alpha chain family. In terms of assembly, homodimer. The RNAP catalytic core consists of 2 alpha, 1 beta, 1 beta' and 1 omega subunit. When a sigma factor is associated with the core the holoenzyme is formed, which can initiate transcription.

The enzyme catalyses RNA(n) + a ribonucleoside 5'-triphosphate = RNA(n+1) + diphosphate. Functionally, DNA-dependent RNA polymerase catalyzes the transcription of DNA into RNA using the four ribonucleoside triphosphates as substrates. This is DNA-directed RNA polymerase subunit alpha from Protochlamydia amoebophila (strain UWE25).